The chain runs to 103 residues: Trp operon repressor homolog (103 aa).

Residues 59–82 (QRQISQMLGVGIATITRGSNELKS) mediate DNA binding.

This sequence belongs to the TrpR family. Homodimer.

The protein localises to the cytoplasm. In terms of biological role, this protein is an aporepressor. When complexed with L-tryptophan it binds the operator region of the trp operon and prevents the initiation of transcription. In Vibrio parahaemolyticus serotype O3:K6 (strain RIMD 2210633), this protein is Trp operon repressor homolog.